Consider the following 541-residue polypeptide: Chaperonin GroEL 1 (541 aa).

ATP contacts are provided by residues 29–32 (TLGP), 86–90 (DGTTT), Gly-413, 478–480 (NAA), and Asp-494. Residues 520-541 (VVEKPAEAEDDGHGHGHGHHHH) form a disordered region. Residues 523–533 (KPAEAEDDGHG) are compositionally biased toward basic and acidic residues.

This sequence belongs to the chaperonin (HSP60) family. In terms of assembly, forms a cylinder of 14 subunits composed of two heptameric rings stacked back-to-back. Interacts with the co-chaperonin GroES.

The protein localises to the cytoplasm. The catalysed reaction is ATP + H2O + a folded polypeptide = ADP + phosphate + an unfolded polypeptide.. Functionally, together with its co-chaperonin GroES, plays an essential role in assisting protein folding. The GroEL-GroES system forms a nano-cage that allows encapsulation of the non-native substrate proteins and provides a physical environment optimized to promote and accelerate protein folding. This is Chaperonin GroEL 1 from Mycolicibacterium gilvum (strain PYR-GCK) (Mycobacterium gilvum (strain PYR-GCK)).